Here is a 1548-residue protein sequence, read N- to C-terminus: Dicer-like protein 1 (1548 aa).

Residues 1 to 41 show a composition bias toward basic and acidic residues; that stretch reads MGDPAAHEMADLERGFSSEDDAEYRSGDDEASKFVENEPSK. A disordered region spans residues 1 to 48; the sequence is MGDPAAHEMADLERGFSSEDDAEYRSGDDEASKFVENEPSKRGKISQK. The 184-residue stretch at 106-289 folds into the Helicase ATP-binding domain; it reads LFERAKQQNT…QAAIELEGLL (184 aa). 119–126 lines the ATP pocket; it reads LDTGSGKT. The DEAH box motif lies at 232-235; the sequence is DEAH. Positions 428-589 constitute a Helicase C-terminal domain; that stretch reads TLSKLLEEYF…FCNTQPEDRL (162 aa). One can recognise a Dicer dsRNA-binding fold domain in the interval 624–718; sequence SLPILQAFLN…RSKFVEKRHV (95 aa). Residues 871–1006 enclose the PAZ domain; that stretch reads PLLRHVADRD…FVLEPMRISP (136 aa). 2 RNase III domains span residues 1051–1197 and 1248–1411; these read LTKD…MTTR and AQKI…VDSK. Glutamate 1288, aspartate 1397, and glutamate 1400 together coordinate Mg(2+). In terms of domain architecture, DRBM spans 1445 to 1518; sequence TFFTQYVFET…ARKALDKLRS (74 aa). Positions 1457, 1489, 1530, and 1532 each coordinate Zn(2+).

This sequence belongs to the helicase family. Dicer subfamily. Requires Mg(2+) as cofactor. It depends on Mn(2+) as a cofactor.

Dicer-like endonuclease involved in cleaving double-stranded RNA in the RNA interference (RNAi) pathway. Produces 21 to 25 bp dsRNAs (siRNAs) which target the selective destruction of homologous RNAs leading to sequence-specific suppression of gene expression, called post-transcriptional gene silencing (PTGS). Part of a broad host defense response against viral infection and transposons. This Cryphonectria parasitica (Chestnut blight fungus) protein is Dicer-like protein 1 (DCL-1).